The following is a 295-amino-acid chain: Nucleotide-binding protein LSEI_0959 (295 aa).

Gly-12 to Thr-19 lines the ATP pocket. Asp-62–Ser-65 is a binding site for GTP.

Belongs to the RapZ-like family.

Displays ATPase and GTPase activities. The chain is Nucleotide-binding protein LSEI_0959 from Lacticaseibacillus paracasei (strain ATCC 334 / BCRC 17002 / CCUG 31169 / CIP 107868 / KCTC 3260 / NRRL B-441) (Lactobacillus paracasei).